Reading from the N-terminus, the 162-residue chain is UPF0262 protein HNE_1347 (162 aa).

Belongs to the UPF0262 family.

In Hyphomonas neptunium (strain ATCC 15444), this protein is UPF0262 protein HNE_1347.